The sequence spans 265 residues: Thiazole synthase (265 aa).

Catalysis depends on Lys-103, which acts as the Schiff-base intermediate with DXP. 1-deoxy-D-xylulose 5-phosphate-binding positions include Gly-164, 190–191, and 212–213; these read AG and NT.

Belongs to the ThiG family. In terms of assembly, homotetramer. Forms heterodimers with either ThiH or ThiS.

Its subcellular location is the cytoplasm. It catalyses the reaction [ThiS sulfur-carrier protein]-C-terminal-Gly-aminoethanethioate + 2-iminoacetate + 1-deoxy-D-xylulose 5-phosphate = [ThiS sulfur-carrier protein]-C-terminal Gly-Gly + 2-[(2R,5Z)-2-carboxy-4-methylthiazol-5(2H)-ylidene]ethyl phosphate + 2 H2O + H(+). It functions in the pathway cofactor biosynthesis; thiamine diphosphate biosynthesis. In terms of biological role, catalyzes the rearrangement of 1-deoxy-D-xylulose 5-phosphate (DXP) to produce the thiazole phosphate moiety of thiamine. Sulfur is provided by the thiocarboxylate moiety of the carrier protein ThiS. In vitro, sulfur can be provided by H(2)S. The protein is Thiazole synthase of Bordetella pertussis (strain Tohama I / ATCC BAA-589 / NCTC 13251).